The chain runs to 144 residues: Large ribosomal subunit protein uL16 (144 aa).

Belongs to the universal ribosomal protein uL16 family. As to quaternary structure, part of the 50S ribosomal subunit.

Functionally, binds 23S rRNA and is also seen to make contacts with the A and possibly P site tRNAs. This is Large ribosomal subunit protein uL16 from Clostridium beijerinckii (strain ATCC 51743 / NCIMB 8052) (Clostridium acetobutylicum).